We begin with the raw amino-acid sequence, 200 residues long: Adenylate kinase (200 aa).

10 to 15 (GAGKGT) contributes to the ATP binding site. The interval 30–59 (STGDMLRAAVAAETPVGLEAKAIMESGGLV) is NMP. AMP-binding positions include threonine 31, arginine 36, 57 to 59 (GLV), 85 to 88 (GFPR), and glutamine 92. Residues 126-142 (KRAEETAARGQPVRKDD) form an LID region. Residue arginine 127 participates in ATP binding. 2 residues coordinate AMP: arginine 139 and arginine 150. Lysine 178 lines the ATP pocket.

Belongs to the adenylate kinase family. As to quaternary structure, monomer.

It localises to the cytoplasm. It carries out the reaction AMP + ATP = 2 ADP. It functions in the pathway purine metabolism; AMP biosynthesis via salvage pathway; AMP from ADP: step 1/1. Catalyzes the reversible transfer of the terminal phosphate group between ATP and AMP. Plays an important role in cellular energy homeostasis and in adenine nucleotide metabolism. This is Adenylate kinase from Methylorubrum extorquens (strain CM4 / NCIMB 13688) (Methylobacterium extorquens).